The following is a 380-amino-acid chain: tRNA-specific 2-thiouridylase MnmA (380 aa).

ATP contacts are provided by residues 6–13 (ALSGGVDS) and Met32. Cys101 functions as the Nucleophile in the catalytic mechanism. The cysteines at positions 101 and 199 are disulfide-linked. Gly125 contributes to the ATP binding site. Positions 148–150 (KDQ) are interaction with tRNA. The active-site Cysteine persulfide intermediate is the Cys199.

Belongs to the MnmA/TRMU family.

It is found in the cytoplasm. The enzyme catalyses S-sulfanyl-L-cysteinyl-[protein] + uridine(34) in tRNA + AH2 + ATP = 2-thiouridine(34) in tRNA + L-cysteinyl-[protein] + A + AMP + diphosphate + H(+). In terms of biological role, catalyzes the 2-thiolation of uridine at the wobble position (U34) of tRNA, leading to the formation of s(2)U34. This chain is tRNA-specific 2-thiouridylase MnmA, found in Beutenbergia cavernae (strain ATCC BAA-8 / DSM 12333 / CCUG 43141 / JCM 11478 / NBRC 16432 / NCIMB 13614 / HKI 0122).